We begin with the raw amino-acid sequence, 188 residues long: Elongation factor P (188 aa).

It belongs to the elongation factor P family.

The protein localises to the cytoplasm. It functions in the pathway protein biosynthesis; polypeptide chain elongation. Its function is as follows. Involved in peptide bond synthesis. Stimulates efficient translation and peptide-bond synthesis on native or reconstituted 70S ribosomes in vitro. Probably functions indirectly by altering the affinity of the ribosome for aminoacyl-tRNA, thus increasing their reactivity as acceptors for peptidyl transferase. The chain is Elongation factor P from Methylobacterium radiotolerans (strain ATCC 27329 / DSM 1819 / JCM 2831 / NBRC 15690 / NCIMB 10815 / 0-1).